The sequence spans 511 residues: Steroid 17-alpha-hydroxylase/17,20 lyase (511 aa).

Position 442 (cysteine 442) interacts with heme.

Belongs to the cytochrome P450 family. Requires heme as cofactor.

The protein resides in the endoplasmic reticulum membrane. It is found in the microsome membrane. The catalysed reaction is a C21-steroid + reduced [NADPH--hemoprotein reductase] + O2 = a 17alpha-hydroxy-C21-steroid + oxidized [NADPH--hemoprotein reductase] + H2O + H(+). It catalyses the reaction progesterone + reduced [NADPH--hemoprotein reductase] + O2 = 17alpha-hydroxyprogesterone + oxidized [NADPH--hemoprotein reductase] + H2O + H(+). It carries out the reaction pregnenolone + reduced [NADPH--hemoprotein reductase] + O2 = 17alpha-hydroxypregnenolone + oxidized [NADPH--hemoprotein reductase] + H2O + H(+). The enzyme catalyses 17alpha-hydroxyprogesterone + reduced [NADPH--hemoprotein reductase] + O2 = androst-4-ene-3,17-dione + acetate + oxidized [NADPH--hemoprotein reductase] + H2O + 2 H(+). The catalysed reaction is 17alpha-hydroxyprogesterone + reduced [NADPH--hemoprotein reductase] + O2 = 16alpha,17alpha-dihydroxyprogesterone + oxidized [NADPH--hemoprotein reductase] + H2O + H(+). It catalyses the reaction 16alpha,17alpha-dihydroxyprogesterone + reduced [NADPH--hemoprotein reductase] + O2 = 6beta,16alpha,17alpha-trihydroxyprogesterone + oxidized [NADPH--hemoprotein reductase] + H2O + H(+). It carries out the reaction 17alpha-hydroxypregnenolone + reduced [NADPH--hemoprotein reductase] + O2 = 3beta-hydroxyandrost-5-en-17-one + acetate + oxidized [NADPH--hemoprotein reductase] + H2O + 2 H(+). The enzyme catalyses 16alpha,17alpha-dihydroxypregnenolone + reduced [NADPH--hemoprotein reductase] + O2 = 3beta,16alpha-dihydroxy-androst-5-en-17-one + acetate + oxidized [NADPH--hemoprotein reductase] + H2O + 2 H(+). The catalysed reaction is 3beta-hydroxyandrost-5-en-17-one + reduced [NADPH--hemoprotein reductase] + O2 = 3beta,16alpha-dihydroxy-androst-5-en-17-one + oxidized [NADPH--hemoprotein reductase] + H2O + H(+). It catalyses the reaction androst-4-ene-3,17-dione + reduced [NADPH--hemoprotein reductase] + O2 = 16alpha-hydroxyandrost-4-ene-3,17-dione + oxidized [NADPH--hemoprotein reductase] + H2O + H(+). It participates in steroid hormone biosynthesis. The protein operates within steroid biosynthesis; glucocorticoid biosynthesis. Its activity is regulated as follows. Regulated predominantly by intracellular cAMP levels. The 17,20-lyase activity is stimulated by cytochrome b5, which acts as an allosteric effector increasing the Vmax of the lyase activity. A cytochrome P450 monooxygenase involved in corticoid and androgen biosynthesis. Catalyzes 17-alpha hydroxylation of C21 steroids, which is common for both pathways. A second oxidative step, required only for androgen synthesis, involves an acyl-carbon cleavage. The 17-alpha hydroxy intermediates, as part of adrenal glucocorticoids biosynthesis pathway, are precursors of cortisol. Hydroxylates steroid hormones, pregnenolone and progesterone to form 17-alpha hydroxy metabolites, followed by the cleavage of the C17-C20 bond to form C19 steroids, dehydroepiandrosterone (DHEA) and androstenedione. Has 16-alpha hydroxylase activity. Catalyzes 16-alpha hydroxylation of 17-alpha hydroxy pregnenolone, followed by the cleavage of the C17-C20 bond to form 16-alpha-hydroxy DHEA. Also 16-alpha hydroxylates androgens, relevant for estriol synthesis. Mechanistically, uses molecular oxygen inserting one oxygen atom into a substrate, and reducing the second into a water molecule, with two electrons provided by NADPH via cytochrome P450 reductase (CPR; NADPH-ferrihemoprotein reductase). The sequence is that of Steroid 17-alpha-hydroxylase/17,20 lyase (CYP17A1) from Mesocricetus auratus (Golden hamster).